The following is a 319-amino-acid chain: 2-oxoglutarate and iron-dependent oxygenase domain-containing protein 3 (319 aa).

The tract at residues 1 to 34 (MAPQRRAATKAPEGNGAAERRNRSSTKKDRAPRE) is disordered. Topologically, residues 1–42 (MAPQRRAATKAPEGNGAAERRNRSSTKKDRAPREVQRLWQRP) are cytoplasmic. Basic and acidic residues predominate over residues 18-34 (AERRNRSSTKKDRAPRE). A helical; Signal-anchor for type II membrane protein membrane pass occupies residues 43 to 65 (WLRTAGLGAGFVLTALLLWSSLG). Residues 66 to 319 (ADDGVAEVLA…DHGIEDPAFP (254 aa)) lie on the Lumenal side of the membrane. The 103-residue stretch at 207–309 (KPTFFSRINS…AITIAFSCNP (103 aa)) folds into the Fe2OG dioxygenase domain. An N-linked (GlcNAc...) asparagine glycan is attached at Asn215. The Fe cation site is built by His230, Asp232, and His288. Arg298 is a catalytic residue. Position 298 (Arg298) interacts with 2-oxoglutarate.

Belongs to the OGFOD3 family. Fe(2+) serves as cofactor. L-ascorbate is required as a cofactor.

It localises to the membrane. In Homo sapiens (Human), this protein is 2-oxoglutarate and iron-dependent oxygenase domain-containing protein 3 (OGFOD3).